Consider the following 410-residue polypeptide: MAKDAGLIEANGELKVFIDQNLSPGKGVVSLVAVHPSTVNSLGKQLLPKTFGQSNVNITQQVVIGTPQRPAAPNTIVVGSPHTPNTHFVSQNQPSDPSPWSAGKRNRKGEKNGKGLRHFSMKVCEKVQRKGTTSYNEVADELVAEFSAADSHILPSESAYDQKNIRRRVYDALNVLMAMNIISKEKKEIKWIGLPTNSAQECQSLEVERQRRLERIKQKQSQLQELILQQIAFKNLVQRNRQVEQQASRPPPPNSVIHLPFIIVNTSKKTVIDCSISNDKFEYLFNFDNTFEIHDDIEVLKRMGMACGLESGSCSPEDLRVARSLVPKALEPYVTEMAQGSLGGVFVASAVSTSNGTRLSASDLANGADGALATSSSGSQYSGSRVETPVSCVGEDDEDDEDFNENEEED.

Position 3 is an N6-acetyllysine (Lys3). Ser23 carries the post-translational modification Phosphoserine; by CDK2. Residues 77–114 (VVGSPHTPNTHFVSQNQPSDPSPWSAGKRNRKGEKNGK) form a disordered region. Over residues 82–95 (HTPNTHFVSQNQPS) the composition is skewed to polar residues. The span at 104-114 (KRNRKGEKNGK) shows a compositional bias: basic residues. Residues 105 to 127 (RNRKGEKNGKGLRHFSMKVCEKV) are interaction with CEBPA. A DNA-binding region spans residues 113–195 (GKGLRHFSMK…KKEIKWIGLP (83 aa)). Residues 161–195 (DQKNIRRRVYDALNVLMAMNIISKEKKEIKWIGLP) carry the DEF box motif. The tract at residues 204 to 277 (SLEVERQRRL…KKTVIDCSIS (74 aa)) is dimerization. An enhances binding of RB protein to E2F region spans residues 211–327 (RRLERIKQKQ…DLRVARSLVP (117 aa)). The segment at 214 to 246 (ERIKQKQSQLQELILQQIAFKNLVQRNRQVEQQ) is DCB1. The interval 259 to 315 (LPFIIVNTSKKTVIDCSISNDKFEYLFNFDNTFEIHDDIEVLKRMGMACGLESGSCS) is DCB2. The interval 370 to 410 (GALATSSSGSQYSGSRVETPVSCVGEDDEDDEDFNENEEED) is disordered. The segment covering 375 to 384 (SSSGSQYSGS) has biased composition (low complexity). Acidic residues predominate over residues 394–410 (GEDDEDDEDFNENEEED).

Belongs to the E2F/DP family. As to quaternary structure, component of the E2F:DP transcription factor complex. Forms heterodimers with E2F family members. The complex can interact with hypophosphorylated retinoblastoma protein RB1 and related proteins (RBL1 and RBL2) that inhibit the E2F transactivation domain. This repression involves recruitment of histone deacetylase (HDAC). During the cell cycle, from mid-to-late G1 phase, RB family members become phosphorylated, detach from the DRTF1/E2F complex to render E2F transcriptionally active. Part of the E2F6.com-1 complex in G0 phase is composed of E2F6, MGA, MAX, TFDP1, CBX3, BAT8, EUHMTASE1, RING1, RNF2, MBLR, L3MBTL2 YAF2. Component of the DREAM complex (also named LINC complex) at least composed of E2F4, E2F5, LIN9, LIN37, LIN52, LIN54, MYBL1, MYBL2, RBL1, RBL2, RBBP4, TFDP1 and TFDP2. The complex exists in quiescent cells where it represses cell cycle-dependent genes. It dissociates in S phase when LIN9, LIN37, LIN52 and LIN54 form a subcomplex that binds to MYBL2. The complex TFDP1:E2F1 interacts with CEBPA; the interaction prevents CEBPA binding to target gene promoters and represses its transcriptional activity. In terms of processing, ubiquitinated by the BCR(KBTBD5) complex, leading to its subsequent degradation. Post-translationally, phosphorylation by E2F1-bound cyclin A-CDK2, in the S phase, inhibits E2F-mediated DNA binding and transactivation.

The protein localises to the nucleus. Its subcellular location is the cytoplasm. Its function is as follows. Can stimulate E2F-dependent transcription. Binds DNA cooperatively with E2F family members through the E2 recognition site, 5'-TTTC[CG]CGC-3', found in the promoter region of a number of genes whose products are involved in cell cycle regulation or in DNA replication. The E2F1:DP complex appears to mediate both cell proliferation and apoptosis. Blocks adipocyte differentiation by repressing CEBPA binding to its target gene promoters. The protein is Transcription factor Dp-1 (TFDP1) of Bos taurus (Bovine).